Reading from the N-terminus, the 536-residue chain is MGALSEIFTAGYVALAGITGFFLVFLGFLVVISDYIDGWRSRRALGDIPIVDEGSNLSPILRWNSQPYDAEAEFTRAYYKYSKNGKPFAARIQHGGYAIVLPPSACRKVRSIGHEQLSFLDALAEFADLSLHMDVTSRRVIEATHACNNETTIKNFQERLALECGKHLAPVFDPPQEQESTELKTLKSVFAAISAVATALILGPDCPEALVSEVTAGATAYNEVMIQCRILRAQYPKILKPLVWRFSRTARELRAILSRLKARLVPEIKRRIAYLEAHSTSENQAESAGSFSLLDILIQTSFKNRHLPSTPVENDKWADLLCQQALLYHFKLSRAPGTSVTFMLYRVMNHPEYATMLRDEMIAALKPSGGNWTADILQRAPKLESFNKETFRMHDISNFVGLRVAMRPVDLRSVSPPLHLKPGTMIMTPSRTVHYDAEHYVDPLTFNGLRFYDATSNTCTPRVFTTSPTYLPFSHGTGSCPARNFATQIARMLFIRLLMGYEFELANEEMPAYGLMDGTAYFPNPEVRMRVRVRGK.

The helical transmembrane segment at 12–32 (YVALAGITGFFLVFLGFLVVI) threads the bilayer. N-linked (GlcNAc...) asparagine glycans are attached at residues Asn149 and Asn371. Cys480 serves as a coordination point for heme.

The protein belongs to the cytochrome P450 family. The cofactor is heme.

The protein localises to the membrane. It catalyses the reaction 2 7-demethylsiderin + NADPH + O2 = desertorin A + NADP(+) + 2 H2O. It functions in the pathway secondary metabolite biosynthesis. Functionally, non-reducing polyketide synthase; part of the gene cluster that mediates the biosynthesis of the bicoumarin desertorin. The non-reducing polyketide synthase desS first catalyzes the formation of the pentaketidic 4,7-dihydroxy-5-methylcoumarin from acetyl coenzyme A and 4 malonyl coenzyme A molecules. Further O-methylation by desB leads to the formation of 7-demethylsiderin. Then, an oxidative phenol coupling catalyzed by the cytochrome P450 monooxygenase desC forms the 6,8'-dimer M-desertorin A via dimerization the monomeric precursor, 7-demethylsiderin. M-desertorin A is further converted to M-desertorin C. In Aspergillus desertorum (Emericella desertorum), this protein is Bicoumarin synthase desC.